A 205-amino-acid polypeptide reads, in one-letter code: Ribosomal RNA small subunit methyltransferase G (205 aa).

Residues G73, L78, 124 to 125 (VE), and R139 contribute to the S-adenosyl-L-methionine site.

This sequence belongs to the methyltransferase superfamily. RNA methyltransferase RsmG family.

The protein localises to the cytoplasm. The enzyme catalyses guanosine(527) in 16S rRNA + S-adenosyl-L-methionine = N(7)-methylguanosine(527) in 16S rRNA + S-adenosyl-L-homocysteine. Its function is as follows. Specifically methylates the N7 position of guanine in position 527 of 16S rRNA. In Methylobacillus flagellatus (strain ATCC 51484 / DSM 6875 / VKM B-1610 / KT), this protein is Ribosomal RNA small subunit methyltransferase G.